Here is a 226-residue protein sequence, read N- to C-terminus: 6-deoxy-6-sulfo-D-fructose transaldolase (226 aa).

The Schiff-base intermediate with substrate role is filled by lysine 89.

This sequence belongs to the transaldolase family.

It carries out the reaction 6-deoxy-6-sulfo-D-fructose + D-glyceraldehyde 3-phosphate = D-fructose 6-phosphate + (2S)-3-sulfolactaldehyde. It catalyses the reaction 6-deoxy-6-sulfo-D-fructose + D-erythrose 4-phosphate = (2S)-3-sulfolactaldehyde + D-sedoheptulose 7-phosphate. Functionally, part of the sulfo-TAL (or sulfo-SFT) pathway, a D-sulfoquinovose degradation pathway that produces sulfolactate (SL). Catalyzes the conversion of 6-deoxy-6-sulfo-D-fructose (SF) and glyceraldehyde 3-phosphate (GAP) into fructose-6-phosphate (F6P) and 3-sulfolactaldehyde (SLA). Can also catalyze the SF-cleavage with erythrose 4-phosphate (E4P) as acceptor, forming 3-sulfolactaldehyde (SLA) and sedoheptulose 7-phosphate (S7P). This Priestia aryabhattai (Bacillus aryabhattai) protein is 6-deoxy-6-sulfo-D-fructose transaldolase.